The sequence spans 122 residues: Large ribosomal subunit protein uL18 (122 aa).

This sequence belongs to the universal ribosomal protein uL18 family. As to quaternary structure, part of the 50S ribosomal subunit; part of the 5S rRNA/L5/L18/L25 subcomplex. Contacts the 5S and 23S rRNAs.

Its function is as follows. This is one of the proteins that bind and probably mediate the attachment of the 5S RNA into the large ribosomal subunit, where it forms part of the central protuberance. This chain is Large ribosomal subunit protein uL18, found in Pseudothermotoga lettingae (strain ATCC BAA-301 / DSM 14385 / NBRC 107922 / TMO) (Thermotoga lettingae).